Reading from the N-terminus, the 377-residue chain is Ejaculatory bulb-specific protein 1 (377 aa).

Residues 1-20 (MVRQLILVLSLILFCGSSHA) form the signal peptide. Residues 155–253 (PIRPGGLFPG…NRPGRPFPGG (99 aa)) form a disordered region. Positions 165-228 (GPSPGGPSPG…GGSPPSPGGP (64 aa)) are enriched in pro residues.

As to expression, specifically expressed in the ejaculatory bulb and seminal fluid. Detected in mated females 3 minutes after the start of mating, and for at least 3 hours after the start of mating.

Its subcellular location is the secreted. In terms of biological role, major protein component of the posterior mating plug. Accessory gland proteins constitute, or are required for formation of the anterior mating plug. Posterior mating plug forms before sperm transfer and the anterior mating plug is formed after the start of mating. The polypeptide is Ejaculatory bulb-specific protein 1 (Drosophila melanogaster (Fruit fly)).